Reading from the N-terminus, the 92-residue chain is Small ribosomal subunit protein uS19 (92 aa).

It belongs to the universal ribosomal protein uS19 family.

Functionally, protein S19 forms a complex with S13 that binds strongly to the 16S ribosomal RNA. The chain is Small ribosomal subunit protein uS19 from Neisseria meningitidis serogroup C (strain 053442).